The primary structure comprises 481 residues: MAKNEKQFVEEITKMEDDFPQWYTDVITKTDLVDYAPVKGFMVVKPYGYALWEKMQEFMDKKFKETGHKNCYFPLLIPESLLNKEAEHVEGFAPEVAWVTHGGNKKLEERLCVRPTSETIICTMYAKWLKSYRELPYLYNQWCSVVRWEKSTRPFLRTSEFLWQEGHTLHETAEEAQEETIQQLEVYKALCEELLAMPVVAGQKSESEKFAGGERTYTIEAMMHDGKALQSGTSHFLGQHFTKAFDITFADREGNLANPYHTSWGASTRLIGGLIMTHSDNRGLVLPPRVAPIQVVIVPIAAKKGNVMETVDKIYADLKAKGVAVEVDDRDNYTTGWKFNEWEMKGVPVRVEIGPKDIENNQAMVFRRDTLEKDSMPLEGLADAICDLFDVIHNDMFEKARKHREDNTSIVENMDEFRKALEEKPGFIKTMWCGDAECEAKIKEETGATIRCLPFEQENLGHKCVYCGKEADSMVVMAKAY.

Belongs to the class-II aminoacyl-tRNA synthetase family. ProS type 3 subfamily. Homodimer.

Its subcellular location is the cytoplasm. The catalysed reaction is tRNA(Pro) + L-proline + ATP = L-prolyl-tRNA(Pro) + AMP + diphosphate. Catalyzes the attachment of proline to tRNA(Pro) in a two-step reaction: proline is first activated by ATP to form Pro-AMP and then transferred to the acceptor end of tRNA(Pro). The protein is Proline--tRNA ligase 2 of Clostridioides difficile (strain 630) (Peptoclostridium difficile).